Reading from the N-terminus, the 119-residue chain is Holo-[acyl-carrier-protein] synthase (119 aa).

Mg(2+)-binding residues include Asp-8 and Glu-58.

Belongs to the P-Pant transferase superfamily. AcpS family. Mg(2+) serves as cofactor.

The protein localises to the cytoplasm. The enzyme catalyses apo-[ACP] + CoA = holo-[ACP] + adenosine 3',5'-bisphosphate + H(+). Its function is as follows. Transfers the 4'-phosphopantetheine moiety from coenzyme A to a Ser of acyl-carrier-protein. The sequence is that of Holo-[acyl-carrier-protein] synthase from Bacillus thuringiensis subsp. konkukian (strain 97-27).